Consider the following 273-residue polypeptide: Cysteine protease S273R (273 aa).

Residues H168 and N187 contribute to the active site. Q226 is a binding site for substrate. C232 serves as the catalytic Nucleophile.

The protein belongs to the peptidase C63 family.

It localises to the host cytoplasm. It is found in the virion. Functionally, cysteine protease that plays several role during infection including processing of the structural polyprotein or inhibition of the host immune response. Catalyzes the maturation of the pp220 and pp62 polyprotein precursors into core-shell proteins. Plays a role in the disruption of host pyroptosis via specific cleavage of gasdermin D/GSDMD. In addition, strongly decreases the host cGAS-STING signaling by targeting IKBKE via its enzymatic activity. Also impairs host FOXJ1-mediated antiviral effect via degradation of FOXJ1. The chain is Cysteine protease S273R from African swine fever virus (isolate Tick/Malawi/Lil 20-1/1983) (ASFV).